Here is a 295-residue protein sequence, read N- to C-terminus: MGPYLSQPKTEKSTVTGQNQVFQYAATHMQGWRNTMEDAHISDMNIEPDVHLFAVFDGHGGSEVAIFAERHFREELMKNKNYQQKNYEKALTETFFKIDKMLQEPSGQDELNKIRGVNDETSLAGCTANVALIVGKTLYVANAGDSRSFLNRDGKPFDMSKDHKPDDDQEKKRIERAGGFVSDGRANGNLSLSRALGDLEYKKDSRFKPEEQIISALPDVKVTQLTASDKFLLMGCDGVFETWDHQQILNFVNQELKSSQNLQKATEKLLDQLLAKDTSLGTGCDNMTCILVLFK.

A PPM-type phosphatase domain is found at 23–294; the sequence is QYAATHMQGW…DNMTCILVLF (272 aa). The Mn(2+) site is built by Asp-57 and Gly-58. A disordered region spans residues 151–170; sequence NRDGKPFDMSKDHKPDDDQE. Residues Asp-237 and Asp-285 each coordinate Mn(2+).

The protein belongs to the PP2C family. The cofactor is Mg(2+). It depends on Mn(2+) as a cofactor.

Its subcellular location is the membrane. It carries out the reaction O-phospho-L-seryl-[protein] + H2O = L-seryl-[protein] + phosphate. The enzyme catalyses O-phospho-L-threonyl-[protein] + H2O = L-threonyl-[protein] + phosphate. Its function is as follows. Enzyme with a broad specificity. The chain is Probable protein phosphatase 2C 5 from Paramecium tetraurelia.